The following is a 450-amino-acid chain: 23S rRNA (uracil(1939)-C(5))-methyltransferase RlmD (450 aa).

The segment at 1 to 22 (MAKHDRGLRFQPAGGSRAPQIP) is disordered. The TRAM domain occupies 20-78 (QIPVGKKQRLTIQRLANDGRGIAFVEGRTWFVSGALAGEEVEARVLGSHGKVVEARAER). Cys91, Cys97, Cys100, and Cys179 together coordinate [4Fe-4S] cluster. Residues Gln283, Phe312, Asn317, Glu333, Asp360, and Asp381 each contribute to the S-adenosyl-L-methionine site. The active-site Nucleophile is the Cys407.

It belongs to the class I-like SAM-binding methyltransferase superfamily. RNA M5U methyltransferase family. RlmD subfamily.

The catalysed reaction is uridine(1939) in 23S rRNA + S-adenosyl-L-methionine = 5-methyluridine(1939) in 23S rRNA + S-adenosyl-L-homocysteine + H(+). In terms of biological role, catalyzes the formation of 5-methyl-uridine at position 1939 (m5U1939) in 23S rRNA. The protein is 23S rRNA (uracil(1939)-C(5))-methyltransferase RlmD of Pseudomonas fluorescens (strain ATCC BAA-477 / NRRL B-23932 / Pf-5).